The sequence spans 241 residues: Ubiquinone biosynthesis O-methyltransferase (241 aa).

Residues R44, G64, D85, and M129 each contribute to the S-adenosyl-L-methionine site.

It belongs to the methyltransferase superfamily. UbiG/COQ3 family.

It catalyses the reaction a 3-demethylubiquinol + S-adenosyl-L-methionine = a ubiquinol + S-adenosyl-L-homocysteine + H(+). The catalysed reaction is a 3-(all-trans-polyprenyl)benzene-1,2-diol + S-adenosyl-L-methionine = a 2-methoxy-6-(all-trans-polyprenyl)phenol + S-adenosyl-L-homocysteine + H(+). It participates in cofactor biosynthesis; ubiquinone biosynthesis. In terms of biological role, O-methyltransferase that catalyzes the 2 O-methylation steps in the ubiquinone biosynthetic pathway. This Serratia proteamaculans (strain 568) protein is Ubiquinone biosynthesis O-methyltransferase.